The sequence spans 491 residues: Acetylcholine receptor subunit epsilon (491 aa).

The signal sequence occupies residues 1–20 (MAGALLCALLLLQLLGRGEG). Topologically, residues 21-239 (KNEELRLYHY…VIYSLIIRRK (219 aa)) are extracellular. Residues N86 and N161 are each glycosylated (N-linked (GlcNAc...) asparagine). Cysteines 148 and 162 form a disulfide. The helical transmembrane segment at 240–264 (PLFYVINIIVPCVLISGLVLLAYFL) threads the bilayer. The Cytoplasmic portion of the chain corresponds to 265 to 272 (PAQAGGQK). The helical transmembrane segment at 273 to 291 (CTVSINVLLAQTVFLFLIA) threads the bilayer. The Extracellular portion of the chain corresponds to 292 to 306 (QKTPETSLSVPLLGR). A helical transmembrane segment spans residues 307–328 (YLIFVMVVATLIVMNCVIVLNV). Residues 329-456 (SLRTPTTHAM…WVRMGKALDS (128 aa)) lie on the Cytoplasmic side of the membrane. Residues 457-480 (ICFWAALVLFLVGSSLIFLGAYFN) traverse the membrane as a helical segment. The Extracellular segment spans residues 481–491 (RVPQLPYPPCM).

It belongs to the ligand-gated ion channel (TC 1.A.9) family. Acetylcholine receptor (TC 1.A.9.1) subfamily. Epsilon/CHRNE sub-subfamily.

It is found in the postsynaptic cell membrane. The protein resides in the cell membrane. The enzyme catalyses K(+)(in) = K(+)(out). It catalyses the reaction Na(+)(in) = Na(+)(out). Its function is as follows. After binding acetylcholine, the AChR responds by an extensive change in conformation that affects all subunits and leads to opening of an ion-conducting channel across the plasma membrane. This chain is Acetylcholine receptor subunit epsilon (CHRNE), found in Bos taurus (Bovine).